Here is a 704-residue protein sequence, read N- to C-terminus: MIVSDIEANALLESVTKFHCGVIYDYSTAEYVSYRPSDFGAYLDALEAEVARGGLIVFHNGHKYDVPALTKLAKLQLNREFHLPRENCIDTLVLSRLIHSNLKDTDMGLLRSGKLPGKRFGSHALEAWGYRLGEMKGEYKDDFKRMLEEQGEEYVDGMEWWNFNEEMMDYNVQDVVVTKALLEKLLSDKHYFPPEIDFTDVGYTTFWSESLEAVDIEHRAAWLLAKQERNGFPFDTKAIEELYVELAARRSELLRKLTETFGSWYQPKGGTEMFCHPRTGKPLPKYPRIKTPKVGGIFKKPKNKAQREGREPCELDTREYVAGAPYTPVEHVVFNPSSRDHIQKKLQEAGWVPTKYTDKGAPVVDDEVLEGVRVDDPEKQAAIDLIKEYLMIQKRIGQSAEGDKAWLRYVAEDGKIHGSVNPNGAVTGRATHAFPNLAQIPGVRSPYGEQCRAAFGAEHHLDGITGKPWVQAGIDASGLELRCLAHFMARFDNGEYAHEILNGDIHTKNQIAAELPTRDNAKTFIYGFLYGAGDEKIGQIVGAGKERGKELKKKFLENTPAIAALRESIQQTLVESSQWVAGEQQVKWKRRWIKGLDGRKVHVRSPHAALNTLLQSAGALICKLWIIKTEEMLVEKGLKHGWDGDFAYMAWVHDEIQVGCRTEEIAQVVIETAQEAMRWVGDHWNFRCLLDTEGKMGPNWAICH.

The segment at 1–187 is 3'-5'exonuclease; sequence MIVSDIEANA…TKALLEKLLS (187 aa). Mg(2+) is bound by residues D5, E7, and D174. The polymerase stretch occupies residues 202 to 704; that stretch reads GYTTFWSESL…KMGPNWAICH (503 aa). The segment at 262-338 is binding to host TrxA; it reads GSWYQPKGGT…VEHVVFNPSS (77 aa). Mg(2+) contacts are provided by D475 and A476. Substrate is bound by residues H506, R518, K522, and Y526. Mg(2+) is bound at residue D654.

Belongs to the DNA polymerase type-A family. Composed of two subunits. One is encoded by the phage and the other is encoded by the host thioredoxin. Interacts with DNA primase/helicase; this interaction is essential for the coordination of DNA unwinding and nucleotide polymerization on duplex DNA. Interacts with the ssDNA-binding protein. Part of the replicase complex that includes the DNA polymerase, thioredoxin, the primase/helicase and the single-stranded DNA binding protein. Mg(2+) serves as cofactor.

It carries out the reaction DNA(n) + a 2'-deoxyribonucleoside 5'-triphosphate = DNA(n+1) + diphosphate. Replicates viral genomic DNA. This polymerase possesses two enzymatic activities: DNA synthesis (polymerase) and an exonucleolytic activity that degrades single-stranded DNA in the 3'-5' direction. Non-processive DNA polymerase that achieves processivity by binding to host thioredoxin (TrxA). This interaction increases the rate of dNTP incorporation to yield a processivity of approximately 800 nucleotides (nt) per binding event. Interacts with DNA helicase gp4 to coordinate nucleotide polymerization with unwinding of the DNA. The leading strand is synthesized continuously while synthesis of the lagging strand requires the synthesis of oligoribonucleotides by the primase domain of gp4. The protein is DNA-directed DNA polymerase of Escherichia phage T7 (Bacteriophage T7).